A 371-amino-acid chain; its full sequence is Chaperone protein DnaJ (371 aa).

Positions 5–69 constitute a J domain; sequence DYYEVLGLSK…QKRAQYDQFG (65 aa). Residues 133-215 form a CR-type zinc finger; it reads GKELNVEIPV…CHGSGKVRKR (83 aa). Positions 146, 149, 163, 166, 189, 192, 203, and 206 each coordinate Zn(2+). CXXCXGXG motif repeat units lie at residues 146 to 153, 163 to 170, 189 to 196, and 203 to 210; these read CDTCKGSG, CKHCSGSG, CGHCSGTG, and CTTCHGSG.

Belongs to the DnaJ family. In terms of assembly, homodimer. The cofactor is Zn(2+).

It localises to the cytoplasm. Its function is as follows. Participates actively in the response to hyperosmotic and heat shock by preventing the aggregation of stress-denatured proteins and by disaggregating proteins, also in an autonomous, DnaK-independent fashion. Unfolded proteins bind initially to DnaJ; upon interaction with the DnaJ-bound protein, DnaK hydrolyzes its bound ATP, resulting in the formation of a stable complex. GrpE releases ADP from DnaK; ATP binding to DnaK triggers the release of the substrate protein, thus completing the reaction cycle. Several rounds of ATP-dependent interactions between DnaJ, DnaK and GrpE are required for fully efficient folding. Also involved, together with DnaK and GrpE, in the DNA replication of plasmids through activation of initiation proteins. The polypeptide is Chaperone protein DnaJ (Bacillus cereus (strain G9842)).